The sequence spans 885 residues: Leucine--tRNA ligase (885 aa).

Positions 48–58 (PYPSGKLHMGH) match the 'HIGH' region motif. Residues 639-643 (TMSKS) carry the 'KMSKS' region motif. K642 contributes to the ATP binding site.

It belongs to the class-I aminoacyl-tRNA synthetase family.

Its subcellular location is the cytoplasm. It catalyses the reaction tRNA(Leu) + L-leucine + ATP = L-leucyl-tRNA(Leu) + AMP + diphosphate. In Bordetella pertussis (strain Tohama I / ATCC BAA-589 / NCTC 13251), this protein is Leucine--tRNA ligase.